The chain runs to 575 residues: G2/mitotic-specific cyclin-B3 (575 aa).

A D-box motif is present at residues 75–83 (RSALGNLTN). The residue at position 215 (S215) is a Phosphoserine.

It belongs to the cyclin family. Cyclin AB subfamily. Interacts with Cdk1 kinase. Ubiquitinated. Ubiquitination leads to its degradation in early anaphase. In terms of tissue distribution, in embryo, it is expressed in all mitotically proliferating cells, with a high level in neuroblasts. Not expressed in old embryos and thereafter. Not expressed in endoreplicating tissues.

It localises to the nucleus. In terms of biological role, cyclins are positive regulatory subunits of the cyclin-dependent kinases (CDKs), and thereby play an essential role in the control of the cell cycle, notably via their destruction during cell division. Probably functions redundantly with other cyclins in regulation of cell cycle. Its presence may be required to delay a deadline for completing cytokinesis that is ordinary imposed by nuclear envelope reformation. Degradation of CycB and CycB3 promote cytokinesis furrow initiation and ingression. Required with CycB for female fertility. The protein is G2/mitotic-specific cyclin-B3 (CycB3) of Drosophila melanogaster (Fruit fly).